Here is a 102-residue protein sequence, read N- to C-terminus: Carboxysome shell protein CsoS1C (102 aa).

Residues 8–93 enclose the BMC domain; it reads ALGMIETRGL…PHKEVEPVLA (86 aa).

The protein belongs to the bacterial microcompartments protein family. CsoS1 subfamily. Homohexamer with a small central pore.

The protein resides in the carboxysome. In terms of biological role, one of shell proteins of the carboxysome, a polyhedral inclusion where RuBisCO (ribulose bisphosphate carboxylase, ccbL-ccbS) is sequestered. Assembles into hexamers which make sheets that form the facets of the polyhedral carboxysome. The shell probably limits the diffusion of CO(2) into and out of the carboxysome. This Hydrogenovibrio crunogenus (strain DSM 25203 / XCL-2) (Thiomicrospira crunogena) protein is Carboxysome shell protein CsoS1C.